A 193-amino-acid chain; its full sequence is dITP/XTP pyrophosphatase (193 aa).

7–12 contributes to the substrate binding site; the sequence is SENENK. Aspartate 65 serves as the catalytic Proton acceptor. A Mg(2+)-binding site is contributed by aspartate 65. Substrate-binding positions include serine 66, 144-147, lysine 167, and 172-173; these read FGYD and HR.

The protein belongs to the HAM1 NTPase family. In terms of assembly, homodimer. Mg(2+) serves as cofactor.

It catalyses the reaction XTP + H2O = XMP + diphosphate + H(+). The catalysed reaction is dITP + H2O = dIMP + diphosphate + H(+). It carries out the reaction ITP + H2O = IMP + diphosphate + H(+). Pyrophosphatase that catalyzes the hydrolysis of nucleoside triphosphates to their monophosphate derivatives, with a high preference for the non-canonical purine nucleotides XTP (xanthosine triphosphate), dITP (deoxyinosine triphosphate) and ITP. Seems to function as a house-cleaning enzyme that removes non-canonical purine nucleotides from the nucleotide pool, thus preventing their incorporation into DNA/RNA and avoiding chromosomal lesions. The sequence is that of dITP/XTP pyrophosphatase from Tropheryma whipplei (strain Twist) (Whipple's bacillus).